We begin with the raw amino-acid sequence, 201 residues long: FMN-dependent NADH:quinone oxidoreductase (201 aa).

FMN is bound at residue 92 to 95 (MWNL).

This sequence belongs to the azoreductase type 1 family. In terms of assembly, homodimer. The cofactor is FMN.

The enzyme catalyses 2 a quinone + NADH + H(+) = 2 a 1,4-benzosemiquinone + NAD(+). The catalysed reaction is N,N-dimethyl-1,4-phenylenediamine + anthranilate + 2 NAD(+) = 2-(4-dimethylaminophenyl)diazenylbenzoate + 2 NADH + 2 H(+). Functionally, quinone reductase that provides resistance to thiol-specific stress caused by electrophilic quinones. Also exhibits azoreductase activity. Catalyzes the reductive cleavage of the azo bond in aromatic azo compounds to the corresponding amines. This chain is FMN-dependent NADH:quinone oxidoreductase, found in Caldicellulosiruptor bescii (strain ATCC BAA-1888 / DSM 6725 / KCTC 15123 / Z-1320) (Anaerocellum thermophilum).